The primary structure comprises 488 residues: Ribulose bisphosphate carboxylase large chain (488 aa).

Residues Asn-127 and Thr-177 each contribute to the substrate site. The active-site Proton acceptor is Lys-179. Position 181 (Lys-181) interacts with substrate. 3 residues coordinate Mg(2+): Lys-205, Asp-207, and Glu-208. Lys-205 is modified (N6-carboxylysine). His-297 serves as the catalytic Proton acceptor. The substrate site is built by Arg-298, His-330, and Ser-382.

This sequence belongs to the RuBisCO large chain family. Type I subfamily. Heterohexadecamer of 8 large chains and 8 small chains. The cofactor is Mg(2+).

Its subcellular location is the plastid. It localises to the chloroplast. It carries out the reaction 2 (2R)-3-phosphoglycerate + 2 H(+) = D-ribulose 1,5-bisphosphate + CO2 + H2O. It catalyses the reaction D-ribulose 1,5-bisphosphate + O2 = 2-phosphoglycolate + (2R)-3-phosphoglycerate + 2 H(+). Its function is as follows. RuBisCO catalyzes two reactions: the carboxylation of D-ribulose 1,5-bisphosphate, the primary event in carbon dioxide fixation, as well as the oxidative fragmentation of the pentose substrate in the photorespiration process. Both reactions occur simultaneously and in competition at the same active site. This is Ribulose bisphosphate carboxylase large chain (rbcL) from Pyropia haitanensis (Red seaweed).